The sequence spans 427 residues: GTPase Obg (427 aa).

One can recognise an Obg domain in the interval 1–158; the sequence is MFVDKVKVYV…RDVILELKVL (158 aa). The segment at 118–144 is disordered; sequence KGGRGGRGNTRFATPANPAPELSENGE. Positions 159–329 constitute an OBG-type G domain; it reads ADAGLVGFPS…LLRAIMDTIE (171 aa). GTP is bound by residues 165 to 172, 190 to 194, 212 to 215, 282 to 285, and 310 to 312; these read GFPSVGKS, FTTIT, DLPG, NKMD, and SAL. Positions 172 and 192 each coordinate Mg(2+). Residues 349-427 enclose the OCT domain; it reads KHDKEQDPFV…LLEFEFEFIE (79 aa).

It belongs to the TRAFAC class OBG-HflX-like GTPase superfamily. OBG GTPase family. Monomer. The cofactor is Mg(2+).

The protein localises to the cytoplasm. In terms of biological role, an essential GTPase which binds GTP, GDP and possibly (p)ppGpp with moderate affinity, with high nucleotide exchange rates and a fairly low GTP hydrolysis rate. Plays a role in control of the cell cycle, stress response, ribosome biogenesis and in those bacteria that undergo differentiation, in morphogenesis control. This Halalkalibacterium halodurans (strain ATCC BAA-125 / DSM 18197 / FERM 7344 / JCM 9153 / C-125) (Bacillus halodurans) protein is GTPase Obg.